The sequence spans 417 residues: Serine/threonine transporter SstT (417 aa).

8 consecutive transmembrane segments (helical) span residues 21–41 (ILAG…VAKM), 49–69 (FISA…MASI), 83–103 (ILVL…VASF), 142–162 (ALIN…GLAL), 193–213 (IGIF…ALAG), 218–238 (LLVL…LIVF), 291–311 (IPLG…ILTL), and 331–351 (LVAA…LLLI).

The protein belongs to the dicarboxylate/amino acid:cation symporter (DAACS) (TC 2.A.23) family.

Its subcellular location is the cell inner membrane. It carries out the reaction L-serine(in) + Na(+)(in) = L-serine(out) + Na(+)(out). The enzyme catalyses L-threonine(in) + Na(+)(in) = L-threonine(out) + Na(+)(out). In terms of biological role, involved in the import of serine and threonine into the cell, with the concomitant import of sodium (symport system). This is Serine/threonine transporter SstT from Proteus mirabilis (strain HI4320).